Here is a 66-residue protein sequence, read N- to C-terminus: ATP synthase protein 8 (66 aa).

Residues 8-24 form a helical membrane-spanning segment; sequence TWLMMIMSMFLALFIIF. K54 is subject to N6-acetyllysine; alternate. K54 carries the N6-succinyllysine; alternate modification. Position 57 is an N6-acetyllysine (K57).

This sequence belongs to the ATPase protein 8 family. F-type ATPases have 2 components, CF(1) - the catalytic core - and CF(0) - the membrane proton channel. Component of an ATP synthase complex composed of ATP5PB, ATP5MC1, ATP5F1E, ATP5PD, ATP5ME, ATP5PF, ATP5MF, MT-ATP6, MT-ATP8, ATP5F1A, ATP5F1B, ATP5F1D, ATP5F1C, ATP5PO, ATP5MG, ATP5MK and ATP5MJ. Interacts with PRICKLE3.

Its subcellular location is the mitochondrion membrane. Mitochondrial membrane ATP synthase (F(1)F(0) ATP synthase or Complex V) produces ATP from ADP in the presence of a proton gradient across the membrane which is generated by electron transport complexes of the respiratory chain. F-type ATPases consist of two structural domains, F(1) - containing the extramembraneous catalytic core and F(0) - containing the membrane proton channel, linked together by a central stalk and a peripheral stalk. During catalysis, ATP synthesis in the catalytic domain of F(1) is coupled via a rotary mechanism of the central stalk subunits to proton translocation. Part of the complex F(0) domain. Minor subunit located with subunit a in the membrane. This Cervus elaphus hippelaphus (European red deer) protein is ATP synthase protein 8 (MT-ATP8).